The chain runs to 540 residues: Putative laccase-11 (540 aa).

Plastocyanin-like domains are found at residues 1 to 114 (MATV…PPRG), 124 to 279 (REVP…YYGA), and 389 to 523 (NFPA…NDGP). The Cu cation site is built by His48, His50, His93, and His95. Cu cation is bound by residues His440, His443, His445, His502, Cys503, His504, and His508.

This sequence belongs to the multicopper oxidase family. The cofactor is Cu cation.

It is found in the secreted. The protein localises to the extracellular space. It localises to the apoplast. It carries out the reaction 4 hydroquinone + O2 = 4 benzosemiquinone + 2 H2O. Its function is as follows. Lignin degradation and detoxification of lignin-derived products. The protein is Putative laccase-11 (LAC11) of Oryza sativa subsp. japonica (Rice).